The chain runs to 367 residues: Chorismate synthase (367 aa).

The interval 39 to 60 (EEFSHDLQRRASGKSRHTSARR) is disordered. Residues Arg-48 and Arg-54 each contribute to the NADP(+) site. Residues 125 to 127 (RSS), 238 to 239 (NA), Gly-278, 293 to 297 (KPTSS), and Arg-319 each bind FMN.

The protein belongs to the chorismate synthase family. As to quaternary structure, homotetramer. The cofactor is FMNH2.

The catalysed reaction is 5-O-(1-carboxyvinyl)-3-phosphoshikimate = chorismate + phosphate. It participates in metabolic intermediate biosynthesis; chorismate biosynthesis; chorismate from D-erythrose 4-phosphate and phosphoenolpyruvate: step 7/7. In terms of biological role, catalyzes the anti-1,4-elimination of the C-3 phosphate and the C-6 proR hydrogen from 5-enolpyruvylshikimate-3-phosphate (EPSP) to yield chorismate, which is the branch point compound that serves as the starting substrate for the three terminal pathways of aromatic amino acid biosynthesis. This reaction introduces a second double bond into the aromatic ring system. The sequence is that of Chorismate synthase from Xanthomonas oryzae pv. oryzae (strain MAFF 311018).